Consider the following 600-residue polypeptide: Pescadillo homolog (600 aa).

The BRCT domain maps to 351 to 450 (PTSTLLSKFI…ELLPVSQYAP (100 aa)). The segment at 454 to 600 (LPPHLSPWGD…AELGKLNKKN (147 aa)) is disordered. The span at 478-509 (QGEEEEEEEEEIEGDEIEEDVEEEDEEEDEDL) shows a compositional bias: acidic residues. Residues 478-600 (QGEEEEEEEE…AELGKLNKKN (123 aa)) adopt a coiled-coil conformation. The span at 530 to 539 (KDKKSSKGKK) shows a compositional bias: basic residues. 2 stretches are compositionally biased toward basic and acidic residues: residues 569 to 580 (IDKKEARQDDLT) and 588 to 600 (KTKAELGKLNKKN).

The protein belongs to the pescadillo family. As to quaternary structure, component of the NOP7 complex, composed of ERB1, NOP7 and YTM1. The complex is held together by ERB1, which interacts with NOP7 via its N-terminal domain and with YTM1 via a high-affinity interaction between the seven-bladed beta-propeller domains of the 2 proteins. The NOP7 complex associates with the 66S pre-ribosome.

It localises to the nucleus. The protein localises to the nucleolus. It is found in the nucleoplasm. In terms of biological role, component of the NOP7 complex, which is required for maturation of the 25S and 5.8S ribosomal RNAs and formation of the 60S ribosome. The protein is Pescadillo homolog of Debaryomyces hansenii (strain ATCC 36239 / CBS 767 / BCRC 21394 / JCM 1990 / NBRC 0083 / IGC 2968) (Yeast).